The primary structure comprises 605 residues: IQ domain-containing protein IQM2 (605 aa).

Positions Lys105 to Gln134 constitute an IQ domain. A disordered region spans residues Gln408 to Val505. Positions Ser425–Glu440 are enriched in basic and acidic residues. Acidic residues predominate over residues Asp462–Gln480. Over residues Glu481–Pro490 the composition is skewed to low complexity. Positions Arg491–Val505 are enriched in basic and acidic residues.

As to expression, expressed in rosette and cauline leaves, stems, flowers and siliques, and at lower levels in roots.

Its subcellular location is the cytoplasm. It is found in the nucleus. Its function is as follows. May be involved in biotic and abiotic stress responses. This chain is IQ domain-containing protein IQM2, found in Arabidopsis thaliana (Mouse-ear cress).